The primary structure comprises 166 residues: Large ribosomal subunit protein uL10 (166 aa).

Belongs to the universal ribosomal protein uL10 family. In terms of assembly, part of the ribosomal stalk of the 50S ribosomal subunit. The N-terminus interacts with L11 and the large rRNA to form the base of the stalk. The C-terminus forms an elongated spine to which L12 dimers bind in a sequential fashion forming a multimeric L10(L12)X complex.

Forms part of the ribosomal stalk, playing a central role in the interaction of the ribosome with GTP-bound translation factors. The protein is Large ribosomal subunit protein uL10 of Hydrogenovibrio crunogenus (strain DSM 25203 / XCL-2) (Thiomicrospira crunogena).